Consider the following 287-residue polypeptide: Fructose-1,6-bisphosphatase class 1 (287 aa).

Residues Glu67, Asp86, Leu88, and Asp89 each coordinate Mg(2+). Residues 89-92 (DGSS), Tyr195, and Lys226 each bind substrate. Glu232 contacts Mg(2+).

This sequence belongs to the FBPase class 1 family. Homotetramer. The cofactor is Mg(2+).

The protein localises to the cytoplasm. It carries out the reaction beta-D-fructose 1,6-bisphosphate + H2O = beta-D-fructose 6-phosphate + phosphate. It participates in carbohydrate biosynthesis; gluconeogenesis. This chain is Fructose-1,6-bisphosphatase class 1, found in Campylobacter concisus (strain 13826).